We begin with the raw amino-acid sequence, 430 residues long: Histidine--tRNA ligase (430 aa).

The protein belongs to the class-II aminoacyl-tRNA synthetase family. Homodimer.

It localises to the cytoplasm. It carries out the reaction tRNA(His) + L-histidine + ATP = L-histidyl-tRNA(His) + AMP + diphosphate + H(+). This chain is Histidine--tRNA ligase (hisS), found in Clostridium acetobutylicum (strain ATCC 824 / DSM 792 / JCM 1419 / IAM 19013 / LMG 5710 / NBRC 13948 / NRRL B-527 / VKM B-1787 / 2291 / W).